Consider the following 281-residue polypeptide: ATP phosphoribosyltransferase (281 aa).

Belongs to the ATP phosphoribosyltransferase family. Long subfamily. It depends on Mg(2+) as a cofactor.

The protein localises to the cytoplasm. It catalyses the reaction 1-(5-phospho-beta-D-ribosyl)-ATP + diphosphate = 5-phospho-alpha-D-ribose 1-diphosphate + ATP. Its pathway is amino-acid biosynthesis; L-histidine biosynthesis; L-histidine from 5-phospho-alpha-D-ribose 1-diphosphate: step 1/9. Feedback inhibited by histidine. Catalyzes the condensation of ATP and 5-phosphoribose 1-diphosphate to form N'-(5'-phosphoribosyl)-ATP (PR-ATP). Has a crucial role in the pathway because the rate of histidine biosynthesis seems to be controlled primarily by regulation of HisG enzymatic activity. The chain is ATP phosphoribosyltransferase from Corynebacterium efficiens (strain DSM 44549 / YS-314 / AJ 12310 / JCM 11189 / NBRC 100395).